Here is a 221-residue protein sequence, read N- to C-terminus: Sperm acrosome membrane-associated protein 3 (221 aa).

Over 1-69 (MGICMSMYTQ…EARSRAPRRQ (69 aa)) the chain is Cytoplasmic. A helical; Signal-anchor for type II membrane protein membrane pass occupies residues 70–90 (LCPPGITWLALAYLLSCLLAS). Over 91–221 (SKAKVFSRCE…LSDWVDGCDF (131 aa)) the chain is Extracellular. The C-type lysozyme domain occupies 94 to 221 (KVFSRCELAK…LSDWVDGCDF (128 aa)). 4 disulfide bridges follow: cysteine 99-cysteine 219, cysteine 123-cysteine 207, cysteine 157-cysteine 172, and cysteine 168-cysteine 186.

Belongs to the glycosyl hydrolase 22 family. In terms of assembly, interacts with ASTL. As to expression, the processed form is expressed in sperm (at protein level). Expressed strongly in testis and epididymis and weakly in pancreas.

The protein resides in the cytoplasmic vesicle. Its subcellular location is the secretory vesicle. The protein localises to the acrosome membrane. It is found in the secreted. Functionally, sperm surface membrane protein that may be involved in sperm-egg plasma membrane adhesion and fusion during fertilization. It could be a potential receptor for the egg oligosaccharide residue N-acetylglucosamine, which is present in the extracellular matrix over the egg plasma membrane. The processed form has no detectable bacteriolytic activity in vitro. This Mus musculus (Mouse) protein is Sperm acrosome membrane-associated protein 3 (Spaca3).